The primary structure comprises 504 residues: MSEKQMKEAFVSNLNGTTVLEITQGLCFPAFCILCRGFLIIFSQYLCSFSPTWKTRFLTDFVVLIVPMVATLTIWASFILLELLGVIIFGAGLLYQIYRRRTCYARLPFLKILEKFLNISLESEYNPAISCFRVITSAFTAIAILAVDFPLFPRRFAKTELYGTGAMDFGVGGFVFGSAMVCLEVRRRKYMEGSKLHYFTNSLYSVWPLVFLGIGRLAIIKSIGYQEHLTEYGVHWNFFFTIIVVKLITPLLLIIFPLNKSWIIALGITVLYQLALDFTSLKRLILYGTDGSGTRVGLLNANREGIISTLGYVAIHMAGVQTGLYMHKNRSHIKDLIKVACFLLLAAISLFISLYVVQVNVEAVSRRMANLAFCIWIVASSLILLSSLLLGDIILSFAKFLIKGALVPCSWKLIQSPVTNKKHSESLVPEAERMEPSLCLITALNRKQLIFFLLSNITTGLINLMVDTLHSSTLWALFVVNLYMFSNCLIVYVLYLQDKTVQFW.

At M1–E21 the chain is on the lumenal side. N15 carries an N-linked (GlcNAc...) asparagine glycan. A helical transmembrane segment spans residues I22 to F42. Residues S43–R56 lie on the Cytoplasmic side of the membrane. The chain crosses the membrane as a helical span at residues F57–W75. Topologically, residues A76 to L81 are lumenal. Residues E82–Y98 traverse the membrane as a helical segment. Over R99–C131 the chain is Cytoplasmic. Residues F132–F152 form a helical membrane-spanning segment. The Lumenal portion of the chain corresponds to P153 to Y162. A helical membrane pass occupies residues G163 to L183. Topologically, residues E184–S202 are cytoplasmic. The helical transmembrane segment at L203–I223 threads the bilayer. The Lumenal segment spans residues G224–N237. A helical membrane pass occupies residues F238–L258. Residues N259–K260 are Cytoplasmic-facing. A helical transmembrane segment spans residues S261 to L281. At K282 to G305 the chain is on the lumenal side. Residues I306–M326 traverse the membrane as a helical segment. Topologically, residues H327–K338 are cytoplasmic. A helical transmembrane segment spans residues V339 to V359. Residues N360–N370 lie on the Lumenal side of the membrane. A helical membrane pass occupies residues L371 to G391. Residues D392 to Q448 lie on the Cytoplasmic side of the membrane. Position 416 is a phosphoserine (S416). A helical membrane pass occupies residues L449–L469. Topologically, residues H470–T473 are lumenal. A helical transmembrane segment spans residues L474–L494. At Y495 to W504 the chain is on the cytoplasmic side.

The protein belongs to the PIGW family.

It is found in the endoplasmic reticulum membrane. It functions in the pathway glycolipid biosynthesis; glycosylphosphatidylinositol-anchor biosynthesis. Functionally, acyltransferase that catalyzes the acyl transfer from an acyl-CoA at the 2-OH position of the inositol ring of glucosaminyl phosphatidylinositol (GlcN-PI) to generate glucosaminyl acyl phosphatidylinositol (GlcN-(acyl)PI) and participates in the fourth step of GPI-anchor biosynthesis. Required for the transport of GPI-anchored proteins to the plasma membrane. Acetylation during GPI-anchor biosynthesis is not essential for the subsequent mannosylation and is usually removed soon after the attachment of GPIs to proteins. This is Glucosaminyl-phosphatidylinositol-acyltransferase PIGW from Homo sapiens (Human).